The sequence spans 256 residues: 5-keto-4-deoxy-D-glucarate aldolase (256 aa).

The active-site Proton acceptor is histidine 50. Position 151 (glutamine 151) interacts with substrate. Mg(2+) is bound at residue glutamate 153. 2 residues coordinate substrate: serine 178 and aspartate 179. Aspartate 179 lines the Mg(2+) pocket.

The protein belongs to the HpcH/HpaI aldolase family. KDGluc aldolase subfamily. As to quaternary structure, homohexamer; trimer of dimers. It depends on Mg(2+) as a cofactor.

The catalysed reaction is 5-dehydro-4-deoxy-D-glucarate = 2-hydroxy-3-oxopropanoate + pyruvate. It catalyses the reaction 2-dehydro-3-deoxy-D-glucarate = 2-hydroxy-3-oxopropanoate + pyruvate. Its pathway is carbohydrate acid metabolism; galactarate degradation; D-glycerate from galactarate: step 2/3. In terms of biological role, catalyzes the reversible retro-aldol cleavage of both 5-keto-4-deoxy-D-glucarate and 2-keto-3-deoxy-D-glucarate to pyruvate and tartronic semialdehyde. This Escherichia coli (strain ATCC 8739 / DSM 1576 / NBRC 3972 / NCIMB 8545 / WDCM 00012 / Crooks) protein is 5-keto-4-deoxy-D-glucarate aldolase.